The primary structure comprises 344 residues: Holliday junction branch migration complex subunit RuvB (344 aa).

The large ATPase domain (RuvB-L) stretch occupies residues 1-182; the sequence is MRIELLNTPV…FGISNRFDYY (182 aa). ATP is bound by residues Ile-21, Arg-22, Gly-63, Lys-66, Thr-67, Thr-68, 129–131, Arg-172, Tyr-182, and Arg-219; that span reads EDF. Residue Thr-67 coordinates Mg(2+). The segment at 183-253 is small ATPAse domain (RuvB-S); sequence PPELLETILM…TAMKTLDSLE (71 aa). The tract at residues 256–344 is head domain (RuvB-H); the sequence is EEGLDEMDKK…GTLFDGQEHV (89 aa). DNA contacts are provided by Arg-311 and Arg-316.

This sequence belongs to the RuvB family. As to quaternary structure, homohexamer. Forms an RuvA(8)-RuvB(12)-Holliday junction (HJ) complex. HJ DNA is sandwiched between 2 RuvA tetramers; dsDNA enters through RuvA and exits via RuvB. An RuvB hexamer assembles on each DNA strand where it exits the tetramer. Each RuvB hexamer is contacted by two RuvA subunits (via domain III) on 2 adjacent RuvB subunits; this complex drives branch migration. In the full resolvosome a probable DNA-RuvA(4)-RuvB(12)-RuvC(2) complex forms which resolves the HJ.

It is found in the cytoplasm. It catalyses the reaction ATP + H2O = ADP + phosphate + H(+). Its function is as follows. The RuvA-RuvB-RuvC complex processes Holliday junction (HJ) DNA during genetic recombination and DNA repair, while the RuvA-RuvB complex plays an important role in the rescue of blocked DNA replication forks via replication fork reversal (RFR). RuvA specifically binds to HJ cruciform DNA, conferring on it an open structure. The RuvB hexamer acts as an ATP-dependent pump, pulling dsDNA into and through the RuvAB complex. RuvB forms 2 homohexamers on either side of HJ DNA bound by 1 or 2 RuvA tetramers; 4 subunits per hexamer contact DNA at a time. Coordinated motions by a converter formed by DNA-disengaged RuvB subunits stimulates ATP hydrolysis and nucleotide exchange. Immobilization of the converter enables RuvB to convert the ATP-contained energy into a lever motion, pulling 2 nucleotides of DNA out of the RuvA tetramer per ATP hydrolyzed, thus driving DNA branch migration. The RuvB motors rotate together with the DNA substrate, which together with the progressing nucleotide cycle form the mechanistic basis for DNA recombination by continuous HJ branch migration. Branch migration allows RuvC to scan DNA until it finds its consensus sequence, where it cleaves and resolves cruciform DNA. The polypeptide is Holliday junction branch migration complex subunit RuvB (Chlorobium luteolum (strain DSM 273 / BCRC 81028 / 2530) (Pelodictyon luteolum)).